The chain runs to 301 residues: rRNA methyltransferase 1, mitochondrial (301 aa).

The transit peptide at 1-11 (MIRSRVNLARE) directs the protein to the mitochondrion. Positions 121–141 (YNNKNGQDSPHNDLNEGKSSS) are disordered.

The protein belongs to the class IV-like SAM-binding methyltransferase superfamily. RNA methyltransferase TrmH family.

It localises to the mitochondrion. It carries out the reaction a guanosine in 21S rRNA + S-adenosyl-L-methionine = a 2'-O-methylguanosine in 21S rRNA + S-adenosyl-L-homocysteine + H(+). S-adenosyl-L-methionine-dependent 2'-O-ribose methyltransferase that catalyzes the formation of the 2'-O-methylguanosine corresponding to position 2270 in S.cerevisiae 21S mitochondrial large subunit ribosomal RNA (mtLSU rRNA), a universally conserved modification in the peptidyl transferase domain of the mtLSU rRNA. In Schizosaccharomyces pombe (strain 972 / ATCC 24843) (Fission yeast), this protein is rRNA methyltransferase 1, mitochondrial.